A 156-amino-acid chain; its full sequence is Small ribosomal subunit protein uS7 (156 aa).

This sequence belongs to the universal ribosomal protein uS7 family. As to quaternary structure, part of the 30S ribosomal subunit. Contacts proteins S9 and S11.

One of the primary rRNA binding proteins, it binds directly to 16S rRNA where it nucleates assembly of the head domain of the 30S subunit. Is located at the subunit interface close to the decoding center, probably blocks exit of the E-site tRNA. This chain is Small ribosomal subunit protein uS7, found in Staphylococcus aureus (strain bovine RF122 / ET3-1).